We begin with the raw amino-acid sequence, 320 residues long: Pyrroline-5-carboxylate reductase 2 (320 aa).

Position 2 is an N-acetylserine (serine 2). NADP(+)-binding positions include 6-11 (IGAGQL) and serine 34. Residues alanine 8, glutamine 10, leucine 11, serine 34, glutamate 36, asparagine 56, valine 70, lysine 71, and alanine 97 each coordinate NADPH. NADP(+) contacts are provided by residues asparagine 56, 69 to 72 (AVKP), and 95 to 97 (CAA). Glutamate 164 is a binding site for L-proline. Position 230 (asparagine 230) interacts with NADPH. Positions 237 and 238 each coordinate L-proline. A compositionally biased stretch (low complexity) spans 295–305 (PTVSTLTPSSP). The interval 295-320 (PTVSTLTPSSPGKLLTRSLALGGKKD) is disordered. Serine 304 bears the Phosphoserine mark.

This sequence belongs to the pyrroline-5-carboxylate reductase family. As to quaternary structure, homodecamer; composed of 5 homodimers. Interacts with LTO1.

It localises to the cytoplasm. Its subcellular location is the mitochondrion. The catalysed reaction is L-proline + NADP(+) = (S)-1-pyrroline-5-carboxylate + NADPH + 2 H(+). It catalyses the reaction L-proline + NAD(+) = (S)-1-pyrroline-5-carboxylate + NADH + 2 H(+). Its pathway is amino-acid biosynthesis; L-proline biosynthesis; L-proline from L-glutamate 5-semialdehyde: step 1/1. Its function is as follows. Oxidoreductase that catalyzes the last step in proline biosynthesis, which corresponds to the reduction of pyrroline-5-carboxylate to L-proline using NAD(P)H. At physiologic concentrations, has higher specific activity in the presence of NADH. Involved in cellular response to oxidative stress. In some cell types, such as erythrocytes, its primary function may be the generation of NADP(+). In Macaca fascicularis (Crab-eating macaque), this protein is Pyrroline-5-carboxylate reductase 2 (PYCR2).